Here is a 285-residue protein sequence, read N- to C-terminus: Probable endonuclease 4 (285 aa).

Residues H69, H109, E145, D179, H182, H216, D229, H231, and E261 each coordinate Zn(2+).

It belongs to the AP endonuclease 2 family. It depends on Zn(2+) as a cofactor.

It catalyses the reaction Endonucleolytic cleavage to 5'-phosphooligonucleotide end-products.. In terms of biological role, endonuclease IV plays a role in DNA repair. It cleaves phosphodiester bonds at apurinic or apyrimidinic (AP) sites, generating a 3'-hydroxyl group and a 5'-terminal sugar phosphate. In Shigella flexneri serotype 5b (strain 8401), this protein is Probable endonuclease 4.